The chain runs to 259 residues: Adenosylcobinamide-GDP ribazoletransferase (259 aa).

6 helical membrane passes run 9-29 (NLFFIAMGFFTRIPMPKWIEV), 43-63 (LVGLLVGAISAAVYSLMLYWV), 64-84 (SPSVAIVFAMITSVLVTGGFH), 118-138 (ALALVLALLLKWQLLTELALF), 143-163 (VSLALIVGHCLSRVVAASFIF), and 196-216 (VLALLLVGLVPALVLITGLVI).

It belongs to the CobS family. Mg(2+) is required as a cofactor.

It is found in the cell inner membrane. The catalysed reaction is alpha-ribazole + adenosylcob(III)inamide-GDP = adenosylcob(III)alamin + GMP + H(+). It catalyses the reaction alpha-ribazole 5'-phosphate + adenosylcob(III)inamide-GDP = adenosylcob(III)alamin 5'-phosphate + GMP + H(+). The protein operates within cofactor biosynthesis; adenosylcobalamin biosynthesis; adenosylcobalamin from cob(II)yrinate a,c-diamide: step 7/7. Its function is as follows. Joins adenosylcobinamide-GDP and alpha-ribazole to generate adenosylcobalamin (Ado-cobalamin). Also synthesizes adenosylcobalamin 5'-phosphate from adenosylcobinamide-GDP and alpha-ribazole 5'-phosphate. This Shewanella halifaxensis (strain HAW-EB4) protein is Adenosylcobinamide-GDP ribazoletransferase.